Here is a 271-residue protein sequence, read N- to C-terminus: Chorismate dehydratase (271 aa).

The protein belongs to the MqnA/MqnD family. MqnA subfamily.

It carries out the reaction chorismate = 3-[(1-carboxyvinyl)-oxy]benzoate + H2O. It functions in the pathway quinol/quinone metabolism; menaquinone biosynthesis. Functionally, catalyzes the dehydration of chorismate into 3-[(1-carboxyvinyl)oxy]benzoate, a step in the biosynthesis of menaquinone (MK, vitamin K2). This is Chorismate dehydratase from Thermus thermophilus (strain ATCC 27634 / DSM 579 / HB8).